Consider the following 559-residue polypeptide: Poly [ADP-ribose] polymerase 2 (559 aa).

A disordered region spans residues 1-58 (MAPRRQRSGSGRRVLNEAKKVDNGNKATEDDSPPGKKMRTCQRKGPMAGGKDADRTKD). The N-terminal region (NTR) stretch occupies residues 1 to 83 (MAPRRQRSGS…VDPECAAKLG (83 aa)). Residues 14–29 (VLNEAKKVDNGNKATE) show a composition bias toward basic and acidic residues. 2 short sequence motifs (nuclear localization signal) span residues 19-20 (KK) and 33-39 (PPGKKMR). N6-(ADP-ribosyl)lysine; alternate is present on residues Lys36 and Lys37. Residues Lys36 and Lys37 each carry the N6-acetyllysine; alternate modification. Residues 84-181 (KAHVYCEGDD…ENFEKVPGKY (98 aa)) enclose the WGR domain. Residues 207–324 (ESQLDLRVQE…DIEIALKLVK (118 aa)) enclose the PARP alpha-helical domain. Position 208 is a phosphoserine (Ser208). One can recognise a PARP catalytic domain in the interval 332-559 (HPLDQHYRNL…KIQFNFLQLW (228 aa)). Residues 404 to 406 (HGS), Gly413, Arg420, and Ser446 each bind NAD(+). Residue Glu534 is the For poly [ADP-ribose] polymerase activity of the active site.

Belongs to the ARTD/PARP family. As to quaternary structure, component of a base excision repair (BER) complex, containing at least XRCC1, PARP1, POLB and LRIG3. Homo- and heterodimer with PARP1. Interacts (via the PARP catalytic domain) with HPF1. Interacts with core nucleosomes. Auto poly-ADP-ribosylated on serine residues, leading to dissociation of the PARP2-HPF1 complex from chromatin. Poly-ADP-ribosylated by PARP1. In terms of processing, acetylation reduces DNA binding and enzymatic activity. Post-translationally, proteolytically cleaved by caspase-8 (CASP8) in response to apoptosis, leading to its inactivation. Widely expressed; the highest levels were in testis followed by ovary. Expression is correlated with proliferation, with higher levels occurring during early fetal development and organogenesis and in the highly proliferative cell compartments of adult.

Its subcellular location is the nucleus. The protein resides in the chromosome. The catalysed reaction is NAD(+) + (ADP-D-ribosyl)n-acceptor = nicotinamide + (ADP-D-ribosyl)n+1-acceptor + H(+).. It carries out the reaction L-seryl-[protein] + NAD(+) = O-(ADP-D-ribosyl)-L-seryl-[protein] + nicotinamide + H(+). It catalyses the reaction L-aspartyl-[protein] + NAD(+) = 4-O-(ADP-D-ribosyl)-L-aspartyl-[protein] + nicotinamide. The enzyme catalyses L-glutamyl-[protein] + NAD(+) = 5-O-(ADP-D-ribosyl)-L-glutamyl-[protein] + nicotinamide. ADP-ribosyltransferase activity is regulated via an allosteric activation mechanism. In absence of activation signal, PARP2 is autoinhibited by the PARP alpha-helical domain (also named HD region), which prevents effective NAD(+)-binding. Activity is highly stimulated by signals, which unfold the PARP alpha-helical domain, relieving autoinhibition. Poly-ADP-ribosyltransferase activity is tightly regulated and PARP2 is removed from damaged chromatin following initial poly-ADP-ribosylation of chromatin to avoid prolonged residence (trapping) that has cytotoxic consequences. CHD1L promotes PARP2 removal from chromatin. In terms of biological role, poly-ADP-ribosyltransferase that mediates poly-ADP-ribosylation of proteins and plays a key role in DNA repair. Mediates glutamate, aspartate or serine ADP-ribosylation of proteins: the ADP-D-ribosyl group of NAD(+) is transferred to the acceptor carboxyl group of target residues and further ADP-ribosyl groups are transferred to the 2'-position of the terminal adenosine moiety, building up a polymer with an average chain length of 20-30 units. Serine ADP-ribosylation of proteins constitutes the primary form of ADP-ribosylation of proteins in response to DNA damage. Mediates glutamate and aspartate ADP-ribosylation of target proteins in absence of HPF1. Following interaction with HPF1, catalyzes serine ADP-ribosylation of target proteins; HPF1 conferring serine specificity by completing the PARP2 active site. PARP2 initiates the repair of double-strand DNA breaks: recognizes and binds DNA breaks within chromatin and recruits HPF1, licensing serine ADP-ribosylation of target proteins, such as histones, thereby promoting decompaction of chromatin and the recruitment of repair factors leading to the reparation of DNA strand breaks. HPF1 initiates serine ADP-ribosylation but restricts the polymerase activity of PARP2 in order to limit the length of poly-ADP-ribose chains. Specifically mediates formation of branched poly-ADP-ribosylation. Branched poly-ADP-ribose chains are specifically recognized by some factors, such as APLF. In addition to proteins, also able to ADP-ribosylate DNA: preferentially acts on 5'-terminal phosphates at DNA strand breaks termini in nicked duplex. This Mus musculus (Mouse) protein is Poly [ADP-ribose] polymerase 2 (Parp2).